A 394-amino-acid polypeptide reads, in one-letter code: Succinate--CoA ligase [ADP-forming] subunit beta 1 (394 aa).

One can recognise an ATP-grasp domain in the interval 9-237 (RDLFAKHDVP…KAAANPLEAA (229 aa)). ATP is bound by residues Lys45, 52–54 (GRG), Glu92, Pro95, and Glu100. Residues Asn192 and Asp206 each contribute to the Mg(2+) site. Substrate is bound by residues Asn257 and 319–321 (GIT).

Belongs to the succinate/malate CoA ligase beta subunit family. As to quaternary structure, heterotetramer of two alpha and two beta subunits. Requires Mg(2+) as cofactor.

It carries out the reaction succinate + ATP + CoA = succinyl-CoA + ADP + phosphate. The catalysed reaction is GTP + succinate + CoA = succinyl-CoA + GDP + phosphate. Its pathway is carbohydrate metabolism; tricarboxylic acid cycle; succinate from succinyl-CoA (ligase route): step 1/1. Succinyl-CoA synthetase functions in the citric acid cycle (TCA), coupling the hydrolysis of succinyl-CoA to the synthesis of either ATP or GTP and thus represents the only step of substrate-level phosphorylation in the TCA. The beta subunit provides nucleotide specificity of the enzyme and binds the substrate succinate, while the binding sites for coenzyme A and phosphate are found in the alpha subunit. The chain is Succinate--CoA ligase [ADP-forming] subunit beta 1 from Streptomyces coelicolor (strain ATCC BAA-471 / A3(2) / M145).